The sequence spans 259 residues: Early E4 30 kDa protein (259 aa).

This sequence belongs to the adenoviridae E4 30 to 34 kDa protein family. Interacts with E1B-55k.

It is found in the host nucleus. The protein localises to the host cytoplasm. Its function is as follows. Plays a major role to prevent cellular inhibition of viral genome replication by nuclear bodies. Assembles an SCF-like E3 ubiquitin ligase complex based on the cellular proteins ELOB, ELOC, CUL5 and RBX1, in cooperation with viral E1B-55K. This viral RING-type ligase ubiquitinates cellular substrates prior to proteasomal degradation: p53/TP53, LIG4, MRE11-RAD50-NBS1 (MRN) complex, ITGA3, DAXX and BLM. The chain is Early E4 30 kDa protein from Canine adenovirus serotype 2 (strain Toronto A 26-61) (CAdV-2).